The sequence spans 224 residues: Peroxiredoxin-6 (224 aa).

Residues 5 to 169 (LLLGDVAPNF…ILRVVISLQL (165 aa)) form the Thioredoxin domain. The segment at 31–40 (DSWGILFSHP) is required and sufficient for targeting to lysosomes and lamellar bodies. T44 is modified (phosphothreonine). Residue C47 is the Cysteine sulfenic acid (-SOH) intermediate; for peroxidase activity of the active site. K63 is subject to N6-acetyllysine. Y89 carries the phosphotyrosine modification. D140 serves as the catalytic For phospholipase activity. At T177 the chain carries Phosphothreonine; by MAPK. Position 209 is an N6-acetyllysine; alternate (K209). K209 is subject to N6-succinyllysine; alternate.

Belongs to the peroxiredoxin family. Prx6 subfamily. As to quaternary structure, homodimer. Interacts with GSTP1; mediates PRDX6 glutathionylation and regeneration. Interacts with APEX1. Interacts with STH. May interact with FAM168B. May interact with HTR2A. Post-translationally, irreversibly inactivated by overoxidation of Cys-47 to sulfinic acid (Cys-SO(2)H) and sulfonic acid (Cys-SO(3)H) forms upon oxidative stress. Phosphorylation at Thr-177 by MAP kinases increases the phospholipase activity of the enzyme. The phosphorylated form exhibits a greater lysophosphatidylcholine acyltransferase activity compared to the non-phosphorylated form.

It is found in the cytoplasm. It localises to the lysosome. The catalysed reaction is a hydroperoxide + 2 glutathione = an alcohol + glutathione disulfide + H2O. It catalyses the reaction a 1,2-diacyl-sn-glycero-3-phosphocholine + H2O = a 1-acyl-sn-glycero-3-phosphocholine + a fatty acid + H(+). It carries out the reaction a 1-acyl-sn-glycero-3-phosphocholine + an acyl-CoA = a 1,2-diacyl-sn-glycero-3-phosphocholine + CoA. The enzyme catalyses 1-hexadecanoyl-sn-glycero-3-phosphocholine + hexadecanoyl-CoA = 1,2-dihexadecanoyl-sn-glycero-3-phosphocholine + CoA. The catalysed reaction is 1,2-dihexadecanoyl-sn-glycero-3-phosphocholine + H2O = 1-hexadecanoyl-sn-glycero-3-phosphocholine + hexadecanoate + H(+). Its activity is regulated as follows. MJ33 or lithium;[(2R)-1-hexadecoxy-3-(2,2,2-trifluoroethoxy)propan-2-yl] methyl phosphate inhibits its phospholipase A2 activity. CI-976 or 2,2-Dimethyl-N-(2,4,6-trimethoxyphenyl)dodecanamide inhibits its lysophosphatidylcholine acyltransferase activity. Functionally, thiol-specific peroxidase that catalyzes the reduction of hydrogen peroxide and organic hydroperoxides to water and alcohols, respectively. Can reduce H(2)O(2) and short chain organic, fatty acid, and phospholipid hydroperoxides. Also has phospholipase activity, can therefore either reduce the oxidized sn-2 fatty acyl group of phospholipids (peroxidase activity) or hydrolyze the sn-2 ester bond of phospholipids (phospholipase activity). These activities are dependent on binding to phospholipids at acidic pH and to oxidized phospholipds at cytosolic pH. Plays a role in cell protection against oxidative stress by detoxifying peroxides and in phospholipid homeostasis. Exhibits acyl-CoA-dependent lysophospholipid acyltransferase which mediates the conversion of lysophosphatidylcholine (1-acyl-sn-glycero-3-phosphocholine or LPC) into phosphatidylcholine (1,2-diacyl-sn-glycero-3-phosphocholine or PC). Shows a clear preference for LPC as the lysophospholipid and for palmitoyl CoA as the fatty acyl substrate. The polypeptide is Peroxiredoxin-6 (PRDX6) (Homo sapiens (Human)).